Reading from the N-terminus, the 246-residue chain is 4-hydroxy-tetrahydrodipicolinate reductase (246 aa).

An NAD(+)-binding site is contributed by 7 to 12; that stretch reads GCSGRM. Arginine 34 is an NADP(+) binding site. NAD(+) contacts are provided by residues 76-78 and 102-105; these read ATT and CPNT. The Proton donor/acceptor role is filled by histidine 135. Position 136 (histidine 136) interacts with (S)-2,3,4,5-tetrahydrodipicolinate. Lysine 139 serves as the catalytic Proton donor. 145 to 146 contributes to the (S)-2,3,4,5-tetrahydrodipicolinate binding site; sequence GT.

The protein belongs to the DapB family.

It localises to the cytoplasm. It catalyses the reaction (S)-2,3,4,5-tetrahydrodipicolinate + NAD(+) + H2O = (2S,4S)-4-hydroxy-2,3,4,5-tetrahydrodipicolinate + NADH + H(+). It carries out the reaction (S)-2,3,4,5-tetrahydrodipicolinate + NADP(+) + H2O = (2S,4S)-4-hydroxy-2,3,4,5-tetrahydrodipicolinate + NADPH + H(+). It functions in the pathway amino-acid biosynthesis; L-lysine biosynthesis via DAP pathway; (S)-tetrahydrodipicolinate from L-aspartate: step 4/4. Its function is as follows. Catalyzes the conversion of 4-hydroxy-tetrahydrodipicolinate (HTPA) to tetrahydrodipicolinate. The polypeptide is 4-hydroxy-tetrahydrodipicolinate reductase (Chlamydia caviae (strain ATCC VR-813 / DSM 19441 / 03DC25 / GPIC) (Chlamydophila caviae)).